Consider the following 306-residue polypeptide: MSTLGHQYDNSLVSNAFGFLRLPMNFQPYDSDADWVITGVPFDMATSGRAGGRHGPAAIRQVSTNLAWEHNRFPWNFDMRERLNVVDCGDLVYAFGDAREMSEKLQAHAEKLLAAGKRMLSFGGDHFVTLPLLRAHAKHFGKMALVHFDAHTDTYANGCEFDHGTMFYTAPKEGLIDPNHSVQIGIRTEFDKDNGFTVLDACQVNDRGVDDVIAQVKQIVGDMPVYLTFDIDCLDPAFAPGTGTPVIGGLTSDRAIKLVRGLKDLNIVGMDVVEVAPAYDQSEITALAAATLALEMLYIQAAKKGE.

Residues histidine 126, aspartate 149, histidine 151, aspartate 153, aspartate 230, and aspartate 232 each contribute to the Mn(2+) site.

It belongs to the arginase family. Agmatinase subfamily. Mn(2+) is required as a cofactor.

The enzyme catalyses agmatine + H2O = urea + putrescine. Its pathway is amine and polyamine biosynthesis; putrescine biosynthesis via agmatine pathway; putrescine from agmatine: step 1/1. In terms of biological role, catalyzes the formation of putrescine from agmatine. This is Agmatinase from Escherichia coli O7:K1 (strain IAI39 / ExPEC).